The primary structure comprises 365 residues: Probable dual-specificity RNA methyltransferase RlmN (365 aa).

The Proton acceptor role is filled by Glu106. The 241-residue stretch at 112–352 (YPDRVTLCVS…VTVRDTRGRE (241 aa)) folds into the Radical SAM core domain. Cys119 and Cys357 are joined by a disulfide. [4Fe-4S] cluster contacts are provided by Cys126, Cys130, and Cys133. S-adenosyl-L-methionine-binding positions include 181–182 (GE), Ser215, 238–240 (SLH), and Asn314. Catalysis depends on Cys357, which acts as the S-methylcysteine intermediate.

Belongs to the radical SAM superfamily. RlmN family. It depends on [4Fe-4S] cluster as a cofactor.

It is found in the cytoplasm. It catalyses the reaction adenosine(2503) in 23S rRNA + 2 reduced [2Fe-2S]-[ferredoxin] + 2 S-adenosyl-L-methionine = 2-methyladenosine(2503) in 23S rRNA + 5'-deoxyadenosine + L-methionine + 2 oxidized [2Fe-2S]-[ferredoxin] + S-adenosyl-L-homocysteine. The enzyme catalyses adenosine(37) in tRNA + 2 reduced [2Fe-2S]-[ferredoxin] + 2 S-adenosyl-L-methionine = 2-methyladenosine(37) in tRNA + 5'-deoxyadenosine + L-methionine + 2 oxidized [2Fe-2S]-[ferredoxin] + S-adenosyl-L-homocysteine. Functionally, specifically methylates position 2 of adenine 2503 in 23S rRNA and position 2 of adenine 37 in tRNAs. The protein is Probable dual-specificity RNA methyltransferase RlmN of Thermobifida fusca (strain YX).